A 307-amino-acid chain; its full sequence is MSLINEHCNERNYISTPNSSEDLSSPQNCGLDEGASASSSSTINSDHQNNQGFVFYPSGETIEDHNSLMDFNASSFFTFDNHRSLISPVTNGGAFPVVDGNMSYSYDGWSHHQVDSISPRVIKTPNSFETTSSFGLTSNSMSKPATNHGNGDWLYSGSTIVNIGSRHESTSPKLAGNKRPFTGENTQLSKKPSSGTNGKIKPKATTSPKDPQSLAAKNRRERISERLKVLQELVPNGTKVDLVTMLEKAIGYVKFLQVQVKVLAADEFWPAQGGKAPDISQVKEAIDAILSSSQRDSNSTRETSIAE.

Disordered stretches follow at residues 1 to 49 (MSLI…DHQN) and 167 to 215 (HEST…QSLA). Polar residues-rich tracts occupy residues 12–28 (NYIS…SPQN) and 183–197 (GENT…SGTN). Residues 207 to 220 (SPKDPQSLAAKNRR) are basic motif. The bHLH domain occupies 207 to 256 (SPKDPQSLAAKNRRERISERLKVLQELVPNGTKVDLVTMLEKAIGYVKFL). The segment at 221–256 (ERISERLKVLQELVPNGTKVDLVTMLEKAIGYVKFL) is helix-loop-helix motif.

As to quaternary structure, homodimer. Forms heterodimers with RHD6. Interacts with TIFY10B/JAZ2, TIFY6A/JAZ4, TIFY5A/JAZ8, TIFY7/JAZ9 and TIFY9/JAZ10.

It localises to the nucleus. Functionally, transcription factor that is specifically required for the development of root hairs. Acts with RHD6 to positively regulate root hair development. Acts downstream of genes that regulate epidermal pattern formation, such as GL2. Acts with RHD6 as transcription factor that integrates a jasmonate (JA) signaling pathway that stimulates root hair growth. This Arabidopsis thaliana (Mouse-ear cress) protein is Putative transcription factor bHLH086.